A 798-amino-acid polypeptide reads, in one-letter code: Acetyl-CoA decarbonylase/synthase complex subunit alpha 2 (798 aa).

Residues C65, C68, C69, C71, C76, and C86 each coordinate [4Fe-4S] cluster. H109 provides a ligand contact to CO. The [Ni-4Fe-4S] cluster site is built by H246, C274, and C313. 4Fe-4S ferredoxin-type domains follow at residues 395-424 and 434-463; these read EEQF…IGEA and SKLE…IDMY. [4Fe-4S] cluster contacts are provided by C405, C408, C411, C415, C443, C446, C449, and C453. The [Ni-4Fe-4S] cluster site is built by C511, C540, and C575.

It belongs to the Ni-containing carbon monoxide dehydrogenase family. Heterotetramer of two alpha and two epsilon subunits. The ACDS complex is made up of alpha, epsilon, beta, gamma and delta subunits with a probable stoichiometry of (alpha(2)epsilon(2))(4)-beta(8)-(gamma(1)delta(1))(8). [4Fe-4S] cluster serves as cofactor. The cofactor is [Ni-4Fe-4S] cluster.

The catalysed reaction is CO + 2 oxidized [2Fe-2S]-[ferredoxin] + H2O = 2 reduced [2Fe-2S]-[ferredoxin] + CO2 + 2 H(+). Part of the ACDS complex that catalyzes the reversible cleavage of acetyl-CoA, allowing autotrophic growth from CO(2). The alpha-epsilon subcomponent functions as a carbon monoxide dehydrogenase. The sequence is that of Acetyl-CoA decarbonylase/synthase complex subunit alpha 2 from Archaeoglobus fulgidus (strain ATCC 49558 / DSM 4304 / JCM 9628 / NBRC 100126 / VC-16).